Reading from the N-terminus, the 37-residue chain is MKVRASVKKICRNCKVIRRNGSVRVICSEPRHKQRQG.

Belongs to the bacterial ribosomal protein bL36 family.

The sequence is that of Large ribosomal subunit protein bL36 from Marinobacter nauticus (strain ATCC 700491 / DSM 11845 / VT8) (Marinobacter aquaeolei).